A 510-amino-acid polypeptide reads, in one-letter code: D-alanine--D-alanyl carrier protein ligase (510 aa).

Residue 157 to 158 (TS) participates in ATP binding. Residue aspartate 202 participates in D-alanine binding. 297 to 302 (NTYGPT) contributes to the ATP binding site. Valine 306 is a binding site for D-alanine. The ATP site is built by aspartate 389 and lysine 498. Lysine 498 lines the D-alanine pocket.

This sequence belongs to the ATP-dependent AMP-binding enzyme family. DltA subfamily.

The protein localises to the cytoplasm. The enzyme catalyses holo-[D-alanyl-carrier protein] + D-alanine + ATP = D-alanyl-[D-alanyl-carrier protein] + AMP + diphosphate. The protein operates within cell wall biogenesis; lipoteichoic acid biosynthesis. Its function is as follows. Catalyzes the first step in the D-alanylation of lipoteichoic acid (LTA), the activation of D-alanine and its transfer onto the D-alanyl carrier protein (Dcp) DltC. In an ATP-dependent two-step reaction, forms a high energy D-alanyl-AMP intermediate, followed by transfer of the D-alanyl residue as a thiol ester to the phosphopantheinyl prosthetic group of the Dcp. D-alanylation of LTA plays an important role in modulating the properties of the cell wall in Gram-positive bacteria, influencing the net charge of the cell wall. The protein is D-alanine--D-alanyl carrier protein ligase of Listeria innocua serovar 6a (strain ATCC BAA-680 / CLIP 11262).